The sequence spans 557 residues: Potassium-transporting ATPase potassium-binding subunit (557 aa).

Transmembrane regions (helical) follow at residues 1–21 (MEILQIAIILIVFVLLCIPIG), 62–82 (QYIFALLMCNAVPAIIGYIIL), 132–152 (IVITFFMFFAAATGIAVALAF), 176–196 (ILLPLSIIVAIFYIGQGVPQT), 253–273 (VQIITLLLLAGSMVVCFGHMI), 279–299 (AVAIFAAMMVLLLAGAAICFS), 371–391 (IFGGVGVGFMNMIMYAILTVF), 415–435 (LVAFAIIVHPFLILMSSALAL), 482–502 (VSAGVVMFLGRYLSIIILLAV), and 528–548 (VTLIVIIVIIGALTFLPAVAL).

This sequence belongs to the KdpA family. The system is composed of three essential subunits: KdpA, KdpB and KdpC.

The protein resides in the cell membrane. Its function is as follows. Part of the high-affinity ATP-driven potassium transport (or Kdp) system, which catalyzes the hydrolysis of ATP coupled with the electrogenic transport of potassium into the cytoplasm. This subunit binds the extracellular potassium ions and delivers the ions to the membrane domain of KdpB through an intramembrane tunnel. This chain is Potassium-transporting ATPase potassium-binding subunit, found in Clostridium acetobutylicum (strain ATCC 824 / DSM 792 / JCM 1419 / IAM 19013 / LMG 5710 / NBRC 13948 / NRRL B-527 / VKM B-1787 / 2291 / W).